The primary structure comprises 439 residues: MAAQAPPTDELSKLSVEDADNKPQPDASNGNLNHDEDDSEDDAEDASAPAAGGAKKKKKRKPRKKKKNPTQQSDPPRVLISQLFPDKQYPKGEEVEYLNENSYRTTNEEKRHLDNLKSEFLNDYRHAAEAHRQVRQWAAKNIKPGQSLTDIANGIEDSVRALVGHQGLEEGDALIAGMGFPTGLSINHCAAHYTPNAGNKMILQQDDVMKIDFGVQVNGNIVDSAFTMAFNPRYDPLLEAVKAATNAGIKEAGIDVRLGEIGGVIQEVMESYEVEIDGTTYPVKPIRNLNGHTILPYNIHGGKSVPIVKSNDTTKMEEGDVFAIETFGSTGGGHVIEDGEVSHYAKRTDAPKVDLRLSSAKSLLSVINKNFGTLPWCRRYLDRLGQEKYLLGLNNLVSNGIVEAYPPLVDKKGSYTAQFEHTILIRPTVKEVISRGDDF.

Residues 1–90 (MAAQAPPTDE…SQLFPDKQYP (90 aa)) are disordered. Basic and acidic residues predominate over residues 10-23 (ELSKLSVEDADNKP). Residues 35 to 45 (DEDDSEDDAED) show a composition bias toward acidic residues. Positions 54 to 68 (AKKKKKRKPRKKKKN) are enriched in basic residues. A substrate-binding site is contributed by His-192. Residues Asp-212, Asp-223, and His-292 each coordinate a divalent metal cation. A substrate-binding site is contributed by His-300. A divalent metal cation is bound by residues Glu-325 and Glu-420.

This sequence belongs to the peptidase M24A family. Methionine aminopeptidase eukaryotic type 2 subfamily. Co(2+) serves as cofactor. It depends on Zn(2+) as a cofactor. Requires Mn(2+) as cofactor. The cofactor is Fe(2+).

It is found in the cytoplasm. The catalysed reaction is Release of N-terminal amino acids, preferentially methionine, from peptides and arylamides.. Functionally, cotranslationally removes the N-terminal methionine from nascent proteins. The N-terminal methionine is often cleaved when the second residue in the primary sequence is small and uncharged (Met-Ala-, Cys, Gly, Pro, Ser, Thr, or Val). In Chaetomium globosum (strain ATCC 6205 / CBS 148.51 / DSM 1962 / NBRC 6347 / NRRL 1970) (Soil fungus), this protein is Methionine aminopeptidase 2-2.